Reading from the N-terminus, the 502-residue chain is Lanosterol 14-alpha demethylase (502 aa).

Residues 22–42 (GNLASMLLIACAFTLSLVYLF) form a helical membrane-spanning segment. Residue C448 coordinates heme.

The protein belongs to the cytochrome P450 family. Heme is required as a cofactor. Ubiquitinated by MARCHF6, leading to proteasomal degradation.

The protein localises to the endoplasmic reticulum membrane. It localises to the microsome membrane. It catalyses the reaction a 14alpha-methyl steroid + 3 reduced [NADPH--hemoprotein reductase] + 3 O2 = a Delta(14) steroid + formate + 3 oxidized [NADPH--hemoprotein reductase] + 4 H2O + 4 H(+). The catalysed reaction is lanosterol + 3 reduced [NADPH--hemoprotein reductase] + 3 O2 = 4,4-dimethyl-5alpha-cholesta-8,14,24-trien-3beta-ol + formate + 3 oxidized [NADPH--hemoprotein reductase] + 4 H2O + 4 H(+). It carries out the reaction 24,25-dihydrolanosterol + 3 reduced [NADPH--hemoprotein reductase] + 3 O2 = 4,4-dimethyl-8,14-cholestadien-3beta-ol + formate + 3 oxidized [NADPH--hemoprotein reductase] + 4 H2O + 4 H(+). The enzyme catalyses a 14alpha-methyl steroid + reduced [NADPH--hemoprotein reductase] + O2 = a 14alpha-hydroxymethyl steroid + oxidized [NADPH--hemoprotein reductase] + H2O + H(+). It catalyses the reaction a 14alpha-hydroxymethyl steroid + reduced [NADPH--hemoprotein reductase] + O2 = a 14alpha-formyl steroid + oxidized [NADPH--hemoprotein reductase] + 2 H2O + H(+). The catalysed reaction is a 14alpha-formyl steroid + reduced [NADPH--hemoprotein reductase] + O2 = a Delta(14) steroid + formate + oxidized [NADPH--hemoprotein reductase] + H2O + 2 H(+). It carries out the reaction lanosterol + reduced [NADPH--hemoprotein reductase] + O2 = 32-hydroxylanosterol + oxidized [NADPH--hemoprotein reductase] + H2O + H(+). The enzyme catalyses 32-hydroxylanosterol + reduced [NADPH--hemoprotein reductase] + O2 = 32-oxolanosterol + oxidized [NADPH--hemoprotein reductase] + 2 H2O + H(+). It catalyses the reaction 32-oxolanosterol + reduced [NADPH--hemoprotein reductase] + O2 = 4,4-dimethyl-5alpha-cholesta-8,14,24-trien-3beta-ol + formate + oxidized [NADPH--hemoprotein reductase] + H2O + 2 H(+). The catalysed reaction is 24,25-dihydrolanosterol + reduced [NADPH--hemoprotein reductase] + O2 = 32-hydroxy-24,25-dihydrolanosterol + oxidized [NADPH--hemoprotein reductase] + H2O + H(+). It carries out the reaction 32-hydroxy-24,25-dihydrolanosterol + reduced [NADPH--hemoprotein reductase] + O2 = 32-oxo-24,25-dihydrolanosterol + oxidized [NADPH--hemoprotein reductase] + 2 H2O + H(+). The enzyme catalyses 32-oxo-24,25-dihydrolanosterol + reduced [NADPH--hemoprotein reductase] + O2 = 4,4-dimethyl-8,14-cholestadien-3beta-ol + formate + oxidized [NADPH--hemoprotein reductase] + H2O + 2 H(+). It functions in the pathway steroid biosynthesis; zymosterol biosynthesis; zymosterol from lanosterol: step 1/6. Inhibited by azalanstat. Inhibited by azole antifungal agents ketoconazole, itraconazole and fluconazole. Sterol 14alpha-demethylase that plays a critical role in the cholesterol biosynthesis pathway, being cholesterol the major sterol component in mammalian membranes as well as a precursor for bile acid and steroid hormone synthesis. Cytochrome P450 monooxygenase that catalyzes the three-step oxidative removal of the 14alpha-methyl group (C-32) of sterols such as lanosterol (lanosta-8,24-dien-3beta-ol) and 24,25-dihydrolanosterol (DHL) in the form of formate, and converts the sterols to 4,4-dimethyl-5alpha-cholesta-8,14,24-trien-3beta-ol and 4,4-dimethyl-8,14-cholestadien-3beta-ol, respectively, which are intermediates of cholesterol biosynthesis. Can also demethylate substrates not intrinsic to mammals, such as eburicol (24-methylene-24,25-dihydrolanosterol), but at a lower rate than DHL. This chain is Lanosterol 14-alpha demethylase, found in Bos taurus (Bovine).